A 423-amino-acid chain; its full sequence is Glutamate-1-semialdehyde 2,1-aminomutase (423 aa).

N6-(pyridoxal phosphate)lysine is present on lysine 263.

This sequence belongs to the class-III pyridoxal-phosphate-dependent aminotransferase family. HemL subfamily. It depends on pyridoxal 5'-phosphate as a cofactor.

It is found in the cytoplasm. The enzyme catalyses (S)-4-amino-5-oxopentanoate = 5-aminolevulinate. It functions in the pathway porphyrin-containing compound metabolism; protoporphyrin-IX biosynthesis; 5-aminolevulinate from L-glutamyl-tRNA(Glu): step 2/2. The protein is Glutamate-1-semialdehyde 2,1-aminomutase of Ignicoccus hospitalis (strain KIN4/I / DSM 18386 / JCM 14125).